A 555-amino-acid polypeptide reads, in one-letter code: Formate--tetrahydrofolate ligase (555 aa).

63–70 is an ATP binding site; the sequence is TPAGEGKT.

Belongs to the formate--tetrahydrofolate ligase family.

The catalysed reaction is (6S)-5,6,7,8-tetrahydrofolate + formate + ATP = (6R)-10-formyltetrahydrofolate + ADP + phosphate. The protein operates within one-carbon metabolism; tetrahydrofolate interconversion. The protein is Formate--tetrahydrofolate ligase of Beijerinckia indica subsp. indica (strain ATCC 9039 / DSM 1715 / NCIMB 8712).